Here is a 527-residue protein sequence, read N- to C-terminus: Splicing factor MUD2 (527 aa).

The disordered stretch occupies residues Asp-36–Arg-169. Basic and acidic residues predominate over residues Thr-42–Lys-55. Phosphoserine is present on Ser-49. Over residues Arg-60 to Gln-85 the composition is skewed to polar residues. The span at Ser-94–Tyr-109 shows a compositional bias: basic and acidic residues. Positions Ser-110–Pro-122 are enriched in polar residues. Composition is skewed to basic and acidic residues over residues Arg-125–Gly-141 and Arg-155–Arg-169. The region spanning Leu-424–Thr-511 is the RRM domain.

In terms of assembly, MSL5, MUD2 and PRP40 interact to form the commitment complex 2 (CC2), a precursor of mature spliceosomes.

In terms of biological role, splicing factor that contacts pre-mRNA directly and is a component of the pre-mRNA-U1 snRNP complex (commitment complex 2) that forms during early spliceosome assembly in yeast extracts. The chain is Splicing factor MUD2 (MUD2) from Saccharomyces cerevisiae (strain ATCC 204508 / S288c) (Baker's yeast).